We begin with the raw amino-acid sequence, 491 residues long: uncharacterized protein (491 aa).

An ATP-binding site is contributed by 267 to 274; the sequence is GIQGTGKS.

This sequence belongs to the AAA ATPase family. Highly divergent.

It is found in the plastid. It localises to the chloroplast. This is an uncharacterized protein from Gracilaria tenuistipitata var. liui (Red alga).